The primary structure comprises 635 residues: Threonine--tRNA ligase (635 aa).

The TGS domain maps to 1-61 (MINISFPDGS…DNDCKLRILT (61 aa)). Residues 242–533 (DHRKLGRELD…LIEEYAGRFP (292 aa)) are catalytic. Zn(2+) contacts are provided by C333, H384, and H510.

It belongs to the class-II aminoacyl-tRNA synthetase family. Homodimer. It depends on Zn(2+) as a cofactor.

The protein localises to the cytoplasm. It catalyses the reaction tRNA(Thr) + L-threonine + ATP = L-threonyl-tRNA(Thr) + AMP + diphosphate + H(+). In terms of biological role, catalyzes the attachment of threonine to tRNA(Thr) in a two-step reaction: L-threonine is first activated by ATP to form Thr-AMP and then transferred to the acceptor end of tRNA(Thr). Also edits incorrectly charged L-seryl-tRNA(Thr). The sequence is that of Threonine--tRNA ligase from Rickettsia africae (strain ESF-5).